The chain runs to 566 residues: Chaperone ric-8 (566 aa).

The protein belongs to the synembryn family. As to quaternary structure, interacts with GDP-bound G-alpha proteins goa-1 and gpa-16. Does not interact with G-alpha proteins when they are in complex with subunits beta and gamma. In terms of tissue distribution, present throughout the nervous system in juveniles and adults (at protein level).

The protein localises to the cytoplasm. Its subcellular location is the cell cortex. Its function is as follows. Chaperone that specifically binds and folds some, but not all, nascent G alpha proteins prior to G protein heterotrimer formation, promoting their stability and activity. Also acts as a guanine nucleotide exchange factor (GEF) for G alpha proteins by stimulating exchange of bound GDP for free GTP. Able to facilitate synaptic transmission in the nervous system probably by activating G(q)-alpha (egl-30). Also able to activate the G(s)-alpha in synaptic signaling network. Plays a key role in asymmetric spindle positioning, a step for asymmetric cell division that generates cell diversity during development by activating G(i)-alpha protein goa-1 and gpa-16 independently of G-protein coupled receptors. While it acts as a GEF for goa-1, it has no GEF activity toward gpa-16. In addition to its GEF activity, it is required for cortical subcellular localization of G-alpha proteins such as gpa-16. Also required for the interaction of goa-1 and gpr-1/2, suggesting that it may act by generating G-alpha proteins free from G-beta-gamma subunits, enabling gpr-1/2 to mediate asymmetric cell division. The sequence is that of Chaperone ric-8 (ric-8) from Caenorhabditis elegans.